The chain runs to 475 residues: tRNA modification GTPase MnmE (475 aa).

Residues Arg24, Glu81, and Lys124 each coordinate (6S)-5-formyl-5,6,7,8-tetrahydrofolate. A TrmE-type G domain is found at 220-397 (GLSVVLAGQP…MRSELLRLIG (178 aa)). Asn230 lines the K(+) pocket. Residues 230–235 (NVGKSS), 249–255 (TPIAGTT), 274–277 (DTAG), and 378–380 (SAR) contribute to the GTP site. Mg(2+) is bound at residue Ser234. Positions 249, 251, and 254 each coordinate K(+). Thr255 contributes to the Mg(2+) binding site. Lys475 lines the (6S)-5-formyl-5,6,7,8-tetrahydrofolate pocket.

This sequence belongs to the TRAFAC class TrmE-Era-EngA-EngB-Septin-like GTPase superfamily. TrmE GTPase family. As to quaternary structure, homodimer. Heterotetramer of two MnmE and two MnmG subunits. K(+) is required as a cofactor.

Its subcellular location is the cytoplasm. In terms of biological role, exhibits a very high intrinsic GTPase hydrolysis rate. Involved in the addition of a carboxymethylaminomethyl (cmnm) group at the wobble position (U34) of certain tRNAs, forming tRNA-cmnm(5)s(2)U34. This is tRNA modification GTPase MnmE from Cupriavidus metallidurans (strain ATCC 43123 / DSM 2839 / NBRC 102507 / CH34) (Ralstonia metallidurans).